The sequence spans 79 residues: D-alanyl carrier protein (79 aa).

The Carrier domain occupies 1–76 (MKEQIFDIIE…KIAARVQEKT (76 aa)). S34 carries the O-(pantetheine 4'-phosphoryl)serine modification.

This sequence belongs to the DltC family. In terms of processing, 4'-phosphopantetheine is transferred from CoA to a specific serine of apo-DCP.

It is found in the cytoplasm. Its pathway is cell wall biogenesis; lipoteichoic acid biosynthesis. Functionally, carrier protein involved in the D-alanylation of lipoteichoic acid (LTA). The loading of thioester-linked D-alanine onto DltC is catalyzed by D-alanine--D-alanyl carrier protein ligase DltA. The DltC-carried D-alanyl group is further transferred to cell membrane phosphatidylglycerol (PG) by forming an ester bond, probably catalyzed by DltD. D-alanylation of LTA plays an important role in modulating the properties of the cell wall in Gram-positive bacteria, influencing the net charge of the cell wall. This chain is D-alanyl carrier protein, found in Lactococcus lactis subsp. cremoris (strain SK11).